The sequence spans 166 residues: 6,7-dimethyl-8-ribityllumazine synthase (166 aa).

5-amino-6-(D-ribitylamino)uracil is bound by residues Phe-24, 58–60 (ALE), and 82–84 (AVV). 87 to 88 (ET) lines the (2S)-2-hydroxy-3-oxobutyl phosphate pocket. Catalysis depends on His-90, which acts as the Proton donor. A 5-amino-6-(D-ribitylamino)uracil-binding site is contributed by Asn-115. A (2S)-2-hydroxy-3-oxobutyl phosphate-binding site is contributed by Arg-129.

It belongs to the DMRL synthase family.

The catalysed reaction is (2S)-2-hydroxy-3-oxobutyl phosphate + 5-amino-6-(D-ribitylamino)uracil = 6,7-dimethyl-8-(1-D-ribityl)lumazine + phosphate + 2 H2O + H(+). The protein operates within cofactor biosynthesis; riboflavin biosynthesis; riboflavin from 2-hydroxy-3-oxobutyl phosphate and 5-amino-6-(D-ribitylamino)uracil: step 1/2. Catalyzes the formation of 6,7-dimethyl-8-ribityllumazine by condensation of 5-amino-6-(D-ribitylamino)uracil with 3,4-dihydroxy-2-butanone 4-phosphate. This is the penultimate step in the biosynthesis of riboflavin. The sequence is that of 6,7-dimethyl-8-ribityllumazine synthase from Cupriavidus necator (strain ATCC 17699 / DSM 428 / KCTC 22496 / NCIMB 10442 / H16 / Stanier 337) (Ralstonia eutropha).